We begin with the raw amino-acid sequence, 126 residues long: Glycine cleavage system H protein (126 aa).

Residues 22–104 enclose the Lipoyl-binding domain; that stretch reads VAIIGITEYA…YEKAWMVKVE (83 aa). An N6-lipoyllysine modification is found at Lys63.

This sequence belongs to the GcvH family. As to quaternary structure, the glycine cleavage system is composed of four proteins: P, T, L and H. (R)-lipoate is required as a cofactor.

In terms of biological role, the glycine cleavage system catalyzes the degradation of glycine. The H protein shuttles the methylamine group of glycine from the P protein to the T protein. Functionally, is also involved in protein lipoylation via its role as an octanoyl/lipoyl carrier protein intermediate. The sequence is that of Glycine cleavage system H protein from Staphylococcus aureus (strain USA300).